The following is a 90-amino-acid chain: UPF0237 protein NMA1909 (90 aa).

Residues 5–83 (VITVIGKDRV…LDIRMQNEEI (79 aa)) enclose the ACT domain.

Belongs to the UPF0237 family.

This chain is UPF0237 protein NMA1909, found in Neisseria meningitidis serogroup A / serotype 4A (strain DSM 15465 / Z2491).